The primary structure comprises 1050 residues: Bifunctional glutamine synthetase adenylyltransferase/adenylyl-removing enzyme (1050 aa).

Positions 1–531 (MTDPLIHTRK…LHSQLFYRPL (531 aa)) are adenylyl removase. The segment at 537 to 1050 (NLSVDAMKLS…LDSVEARREL (514 aa)) is adenylyl transferase.

The protein belongs to the GlnE family. The cofactor is Mg(2+).

The enzyme catalyses [glutamine synthetase]-O(4)-(5'-adenylyl)-L-tyrosine + phosphate = [glutamine synthetase]-L-tyrosine + ADP. It catalyses the reaction [glutamine synthetase]-L-tyrosine + ATP = [glutamine synthetase]-O(4)-(5'-adenylyl)-L-tyrosine + diphosphate. Involved in the regulation of glutamine synthetase GlnA, a key enzyme in the process to assimilate ammonia. When cellular nitrogen levels are high, the C-terminal adenylyl transferase (AT) inactivates GlnA by covalent transfer of an adenylyl group from ATP to specific tyrosine residue of GlnA, thus reducing its activity. Conversely, when nitrogen levels are low, the N-terminal adenylyl removase (AR) activates GlnA by removing the adenylyl group by phosphorolysis, increasing its activity. The regulatory region of GlnE binds the signal transduction protein PII (GlnB) which indicates the nitrogen status of the cell. This chain is Bifunctional glutamine synthetase adenylyltransferase/adenylyl-removing enzyme, found in Corynebacterium efficiens (strain DSM 44549 / YS-314 / AJ 12310 / JCM 11189 / NBRC 100395).